A 181-amino-acid chain; its full sequence is Adenine phosphoribosyltransferase (181 aa).

This sequence belongs to the purine/pyrimidine phosphoribosyltransferase family. As to quaternary structure, homodimer.

It is found in the cytoplasm. It catalyses the reaction AMP + diphosphate = 5-phospho-alpha-D-ribose 1-diphosphate + adenine. The protein operates within purine metabolism; AMP biosynthesis via salvage pathway; AMP from adenine: step 1/1. Its function is as follows. Catalyzes a salvage reaction resulting in the formation of AMP, that is energically less costly than de novo synthesis. This is Adenine phosphoribosyltransferase from Vibrio cholerae serotype O1 (strain ATCC 39541 / Classical Ogawa 395 / O395).